A 381-amino-acid polypeptide reads, in one-letter code: Opsin Rh2 (381 aa).

The Extracellular segment spans residues 1 to 56; that stretch reads MERSLLPEPPLAMALLGPRFEAQTGGNRSVLDNVLPDMAPLVNPYWSRFAPMDPTM. Asparagine 27 carries N-linked (GlcNAc...) asparagine glycosylation. A helical transmembrane segment spans residues 57 to 81; the sequence is SKILGLFTLVILIISCCGNGVVVYI. Residues 82 to 93 lie on the Cytoplasmic side of the membrane; the sequence is FGGTKSLRTPAN. Residues 94-119 form a helical membrane-spanning segment; sequence LLVLNLAFSDFCMMASQSPVMIINFY. Residues 120–133 are Extracellular-facing; the sequence is YETWVLGPLWCDIY. A disulfide bridge links cysteine 130 with cysteine 207. Residues 134–153 traverse the membrane as a helical segment; it reads AACGSLFGCVSIWSMCMIAF. Topologically, residues 154–172 are cytoplasmic; the sequence is DRYNVIVKGINGTPMTIKT. The helical transmembrane segment at 173 to 196 threads the bilayer; the sequence is SIMKIAFIWMMAVFWTIMPLIGWS. Residues 197 to 220 lie on the Extracellular side of the membrane; that stretch reads SYVPEGNLTACSIDYMTRQWNPRS. Residues 221 to 248 traverse the membrane as a helical segment; sequence YLITYSLFVYYTPLFMICYSYWFIIATV. The Cytoplasmic portion of the chain corresponds to 249–283; that stretch reads AAHEKAMRDQAKKMNVKSLRSSEDCDKSAENKLAK. Residues 284–307 traverse the membrane as a helical segment; it reads VALTTISLWFMAWTPYLIICYFGL. The Extracellular portion of the chain corresponds to 308–314; sequence FKIDGLT. Residues 315–339 traverse the membrane as a helical segment; it reads PLTTIWGATFAKTSAVYNPIVYGIS. Position 326 is an N6-(retinylidene)lysine (lysine 326). The Cytoplasmic portion of the chain corresponds to 340–381; sequence HPKYRLVLKEKCPMCVCGSTDEPKPDAPPSDTETTSEAESKA. Residues 358–381 form a disordered region; that stretch reads STDEPKPDAPPSDTETTSEAESKA. Residues 370–381 show a composition bias toward polar residues; it reads DTETTSEAESKA.

This sequence belongs to the G-protein coupled receptor 1 family. Opsin subfamily. Some or all of the Ser/Thr residues present in the C-terminal part may be phosphorylated.

Its subcellular location is the membrane. Visual pigments are the light-absorbing molecules that mediate vision. They consist of an apoprotein, opsin, covalently linked to cis-retinal. The chain is Opsin Rh2 (Rh2) from Drosophila pseudoobscura pseudoobscura (Fruit fly).